The primary structure comprises 313 residues: Homoserine O-acetyltransferase (313 aa).

The active-site Acyl-thioester intermediate is C142. The substrate site is built by K163 and S191. The active-site Proton acceptor is the H234. Residue E236 is part of the active site. R248 is a substrate binding site.

This sequence belongs to the MetA family.

The protein resides in the cytoplasm. The catalysed reaction is L-homoserine + acetyl-CoA = O-acetyl-L-homoserine + CoA. Its pathway is amino-acid biosynthesis; L-methionine biosynthesis via de novo pathway; O-acetyl-L-homoserine from L-homoserine: step 1/1. Its function is as follows. Transfers an acetyl group from acetyl-CoA to L-homoserine, forming acetyl-L-homoserine. This Streptococcus gordonii (strain Challis / ATCC 35105 / BCRC 15272 / CH1 / DL1 / V288) protein is Homoserine O-acetyltransferase.